Consider the following 211-residue polypeptide: Pupal cuticle protein G1A (211 aa).

A run of 5 repeats spans residues 13–16, 21–24, 33–36, 111–114, and 179–182.

Functionally, component of the cuticle of the pupa of Tenebrio molitor. The protein is Pupal cuticle protein G1A of Tenebrio molitor (Yellow mealworm beetle).